The sequence spans 83 residues: Large ribosomal subunit protein bL27 (83 aa).

The interval 1–25 (MAHKKGQGASRNGRDSESKRLGLKV) is disordered.

This sequence belongs to the bacterial ribosomal protein bL27 family.

This is Large ribosomal subunit protein bL27 from Chlamydia trachomatis serovar L2 (strain ATCC VR-902B / DSM 19102 / 434/Bu).